Here is a 155-residue protein sequence, read N- to C-terminus: Ribonuclease H (155 aa).

Positions 1–143 constitute an RNase H type-1 domain; that stretch reads MNQVEIYTDG…ADALANRGVD (143 aa). Residues Asp-9, Glu-47, Asp-69, and Asp-135 each contribute to the Mg(2+) site.

This sequence belongs to the RNase H family. As to quaternary structure, monomer. Requires Mg(2+) as cofactor.

It localises to the cytoplasm. The enzyme catalyses Endonucleolytic cleavage to 5'-phosphomonoester.. In terms of biological role, endonuclease that specifically degrades the RNA of RNA-DNA hybrids. The protein is Ribonuclease H of Verminephrobacter eiseniae (strain EF01-2).